The following is a 339-amino-acid chain: Ketol-acid reductoisomerase (NADP(+)) (339 aa).

Residues 1–182 (MRVYYDRDAD…GGGRSGVIET (182 aa)) form the KARI N-terminal Rossmann domain. Residues 24–27 (YGSQ), Arg48, Ser51, Thr53, and 83–86 (DELQ) contribute to the NADP(+) site. The active site involves His108. Gly134 serves as a coordination point for NADP(+). In terms of domain architecture, KARI C-terminal knotted spans 183–328 (TFKEECETDL…GKLRAMMPWI (146 aa)). Residues Asp191, Glu195, Glu227, and Glu231 each contribute to the Mg(2+) site. Ser252 provides a ligand contact to substrate.

It belongs to the ketol-acid reductoisomerase family. It depends on Mg(2+) as a cofactor.

It carries out the reaction (2R)-2,3-dihydroxy-3-methylbutanoate + NADP(+) = (2S)-2-acetolactate + NADPH + H(+). It catalyses the reaction (2R,3R)-2,3-dihydroxy-3-methylpentanoate + NADP(+) = (S)-2-ethyl-2-hydroxy-3-oxobutanoate + NADPH + H(+). It functions in the pathway amino-acid biosynthesis; L-isoleucine biosynthesis; L-isoleucine from 2-oxobutanoate: step 2/4. It participates in amino-acid biosynthesis; L-valine biosynthesis; L-valine from pyruvate: step 2/4. Its function is as follows. Involved in the biosynthesis of branched-chain amino acids (BCAA). Catalyzes an alkyl-migration followed by a ketol-acid reduction of (S)-2-acetolactate (S2AL) to yield (R)-2,3-dihydroxy-isovalerate. In the isomerase reaction, S2AL is rearranged via a Mg-dependent methyl migration to produce 3-hydroxy-3-methyl-2-ketobutyrate (HMKB). In the reductase reaction, this 2-ketoacid undergoes a metal-dependent reduction by NADPH to yield (R)-2,3-dihydroxy-isovalerate. This Brucella melitensis biotype 2 (strain ATCC 23457) protein is Ketol-acid reductoisomerase (NADP(+)).